A 508-amino-acid polypeptide reads, in one-letter code: Acetyl-coenzyme A carboxylase carboxyl transferase subunit beta, chloroplastic (508 aa).

Disordered stretches follow at residues 30–51 (PIENASESKDPNRNDTDKNIQG) and 173–234 (NSSN…SSTH). The span at 35-47 (SESKDPNRNDTDK) shows a compositional bias: basic and acidic residues. A compositionally biased stretch (low complexity) spans 173–219 (NSSNNNSSNENSSNENSSNENSSNENSSNDYISSSISSQSENSSQNE). Residues 220 to 234 (DITTSDQTIPESSTH) show a composition bias toward polar residues. The 265-residue stretch at 244–508 (LWVQCENCYG…LHTFFPLNQN (265 aa)) folds into the CoA carboxyltransferase N-terminal domain. 4 residues coordinate Zn(2+): Cys248, Cys251, Cys267, and Cys270. The C4-type zinc-finger motif lies at 248–270 (CENCYGLNYKKFFKSKMHLCEQC).

This sequence belongs to the AccD/PCCB family. Acetyl-CoA carboxylase is a heterohexamer composed of biotin carboxyl carrier protein, biotin carboxylase and 2 subunits each of ACCase subunit alpha and ACCase plastid-coded subunit beta (accD). Zn(2+) serves as cofactor.

It is found in the plastid. The protein localises to the chloroplast stroma. It carries out the reaction N(6)-carboxybiotinyl-L-lysyl-[protein] + acetyl-CoA = N(6)-biotinyl-L-lysyl-[protein] + malonyl-CoA. It participates in lipid metabolism; malonyl-CoA biosynthesis; malonyl-CoA from acetyl-CoA: step 1/1. Functionally, component of the acetyl coenzyme A carboxylase (ACC) complex. Biotin carboxylase (BC) catalyzes the carboxylation of biotin on its carrier protein (BCCP) and then the CO(2) group is transferred by the transcarboxylase to acetyl-CoA to form malonyl-CoA. This chain is Acetyl-coenzyme A carboxylase carboxyl transferase subunit beta, chloroplastic, found in Lactuca sativa (Garden lettuce).